The following is a 426-amino-acid chain: uncharacterized protein (426 aa).

This is an uncharacterized protein from Acidianus filamentous virus 1 (isolate United States/Yellowstone) (AFV-1).